A 335-amino-acid chain; its full sequence is Tetraacyldisaccharide 4'-kinase (335 aa).

58-65 contributes to the ATP binding site; sequence TVGGVGKT.

This sequence belongs to the LpxK family.

It carries out the reaction a lipid A disaccharide + ATP = a lipid IVA + ADP + H(+). It participates in glycolipid biosynthesis; lipid IV(A) biosynthesis; lipid IV(A) from (3R)-3-hydroxytetradecanoyl-[acyl-carrier-protein] and UDP-N-acetyl-alpha-D-glucosamine: step 6/6. Functionally, transfers the gamma-phosphate of ATP to the 4'-position of a tetraacyldisaccharide 1-phosphate intermediate (termed DS-1-P) to form tetraacyldisaccharide 1,4'-bis-phosphate (lipid IVA). The chain is Tetraacyldisaccharide 4'-kinase from Caulobacter sp. (strain K31).